The chain runs to 474 residues: Proline--tRNA ligase (474 aa).

Belongs to the class-II aminoacyl-tRNA synthetase family. ProS type 3 subfamily. In terms of assembly, homodimer.

The protein resides in the cytoplasm. It carries out the reaction tRNA(Pro) + L-proline + ATP = L-prolyl-tRNA(Pro) + AMP + diphosphate. In terms of biological role, catalyzes the attachment of proline to tRNA(Pro) in a two-step reaction: proline is first activated by ATP to form Pro-AMP and then transferred to the acceptor end of tRNA(Pro). This Aster yellows witches'-broom phytoplasma (strain AYWB) protein is Proline--tRNA ligase.